The sequence spans 1102 residues: Voltage-gated delayed rectifier potassium channel KCNH8 (1102 aa).

Residues 1-225 (MPVMKGLLAP…HFSTFKAGWD (225 aa)) lie on the Cytoplasmic side of the membrane. The 73-residue stretch at 18-90 (IATRFDGTHS…LQIEKSLEEK (73 aa)) folds into the PAS domain. The region spanning 93-145 (FKGEIMFYKKNGAPFWCLLDIVPIKNEKGDVVLFLASFKDITDTKVKITSEDK) is the PAC domain. A compositionally biased stretch (basic and acidic residues) spans 142–151 (SEDKKEDRTK). The tract at residues 142-162 (SEDKKEDRTKGRSRAGSHFDS) is disordered. The helical transmembrane segment at 226–246 (WLILLATFYVAVTVPYNVCFI) threads the bilayer. Topologically, residues 247–255 (GNEDLSTTR) are extracellular. The chain crosses the membrane as a helical span at residues 256 to 276 (STTVSDIAVEILFIIDIILNF). Residues 277–298 (RTTYVSKSGQVIFEARSICIHY) are Cytoplasmic-facing. A helical membrane pass occupies residues 299–319 (VTTWFIIDLIAALPFDLLYAF). Residue asparagine 320 is glycosylated (N-linked (GlcNAc...) asparagine). Residues 320–327 (NVTVVSLV) lie on the Extracellular side of the membrane. A helical; Voltage-sensor transmembrane segment spans residues 328 to 348 (HLLKTVRLLRLLRLLQKLDRY). Over 349–357 (SQHSTIVLT) the chain is Cytoplasmic. The chain crosses the membrane as a helical span at residues 358–378 (LLMSMFALLAHWMACIWYVIG). The Extracellular portion of the chain corresponds to 379-419 (KMEREDNSLLKWEVGWLHELGKRLESPYYGNNTLGGPSIRS). A glycan (N-linked (GlcNAc...) asparagine) is linked at asparagine 409. Residues 420–440 (AYIAALYFTLSSLTSVGFGNV) constitute an intramembrane region (pore-forming). The short motif at 434 to 439 (SVGFGN) is the Selectivity filter element. The Extracellular portion of the chain corresponds to 441 to 448 (SANTDAEK). Residues 449 to 469 (IFSICTMLIGALMHALVFGNV) form a helical membrane-spanning segment. The Cytoplasmic portion of the chain corresponds to 470–1102 (TAIIQRMYSR…DVKDSKAINV (633 aa)). The segment at 551–668 (LFECASRGCL…HKFVEDIQHD (118 aa)) is cNMP-binding domain. A compositionally biased stretch (polar residues) spans 684–693 (RLSNKSTVSQ). 3 disordered regions span residues 684–743 (RLSN…KKTG), 764–841 (HSPI…PEPR), and 960–991 (LVGSSPQRTEAHEQNPADSELHHSPNLDYSPS). Residues 710-723 (VEDEEEEEVEEEET) show a composition bias toward acidic residues. Residues 724-737 (TSLSPIYTRGSSVS) show a composition bias toward polar residues. A compositionally biased stretch (basic and acidic residues) spans 968 to 984 (TEAHEQNPADSELHHSP).

The protein belongs to the potassium channel family. H (Eag) (TC 1.A.1.20) subfamily. Kv12.1/KCNH8 sub-subfamily. In terms of assembly, the potassium channel is probably composed of a homo- or heterotetrameric complex of pore-forming alpha subunits that can associate with modulating beta subunits.

The protein resides in the membrane. The catalysed reaction is K(+)(in) = K(+)(out). Pore-forming (alpha) subunit of a voltage-gated delayed rectifier potassium channel that mediates outward-rectifying potassium currents. Elicits a slowly activating, non-inactivating and slowly deactivation outwards potassium current at depolarizating voltages from -30 mV to +50mV. Shows no obvious change in the activation rate from different holding potentials. Activation is strongly dependent on the pH of the external solution. The sequence is that of Voltage-gated delayed rectifier potassium channel KCNH8 from Mus musculus (Mouse).